The following is a 339-amino-acid chain: Fructose-1,6-bisphosphatase class 1 (339 aa).

Residues glutamate 91, aspartate 113, leucine 115, and aspartate 116 each contribute to the Mg(2+) site. Residues 116–119 (DGSS), asparagine 208, and lysine 274 contribute to the substrate site. Glutamate 280 contacts Mg(2+).

The protein belongs to the FBPase class 1 family. As to quaternary structure, homotetramer. It depends on Mg(2+) as a cofactor.

The protein localises to the cytoplasm. It carries out the reaction beta-D-fructose 1,6-bisphosphate + H2O = beta-D-fructose 6-phosphate + phosphate. Its pathway is carbohydrate biosynthesis; gluconeogenesis. The chain is Fructose-1,6-bisphosphatase class 1 from Cupriavidus pinatubonensis (strain JMP 134 / LMG 1197) (Cupriavidus necator (strain JMP 134)).